Consider the following 932-residue polypeptide: Protocadherin gamma-A3 (932 aa).

The signal sequence occupies residues 1–29 (MTNCLSFRNGRGLALLCALLGTLCETGSG). Cadherin domains follow at residues 30-133 (QIRY…APNF), 134-242 (PTEE…PPMF), 243-347 (TQPE…APEI), 348-452 (TITS…PPTF), 453-562 (PHLS…APEI), and 570-682 (DGST…EPSA). At 30-692 (QIRYSVSEEL…KPNDSDLTLY (663 aa)) the chain is on the extracellular side. N-linked (GlcNAc...) asparagine glycans are attached at residues Asn265, Asn419, and Asn545. Residue Asn685 is glycosylated (N-linked (GlcNAc...) asparagine). A helical transmembrane segment spans residues 693-713 (LVVAVAAVSCVFLAFVIVLLA). Topologically, residues 714-932 (LRLRRWHKSR…KKKSGKKEKK (219 aa)) are cytoplasmic. 2 disordered regions span residues 805–841 (NLLQ…WPNN) and 902–932 (ATLT…KEKK). Positions 922 to 932 (NKKKSGKKEKK) are enriched in basic residues.

It localises to the cell membrane. Potential calcium-dependent cell-adhesion protein. May be involved in the establishment and maintenance of specific neuronal connections in the brain. This Homo sapiens (Human) protein is Protocadherin gamma-A3 (PCDHGA3).